Here is a 738-residue protein sequence, read N- to C-terminus: Glycogen [starch] synthase, muscle (738 aa).

Ser-8 is subject to Phosphoserine; by AMPK and PKA. Ser-11 carries the post-translational modification Phosphoserine. Lys-39 provides a ligand contact to UDP. UDP-alpha-D-glucose contacts are provided by His-205 and Arg-211. Alpha-D-glucose 6-phosphate is bound by residues His-291, Glu-292, Gln-294, His-297, and Lys-301. Arg-331 contributes to the UDP binding site. Arg-331 is a UDP-alpha-D-glucose binding site. Ser-412 is modified (phosphoserine). His-501 contributes to the alpha-D-glucose 6-phosphate binding site. Positions 510, 512, and 513 each coordinate UDP-alpha-D-glucose. Thr-515 contributes to the UDP binding site. Alpha-D-glucose 6-phosphate is bound by residues Arg-582 and Arg-586. Residues 632-738 form a disordered region; that stretch reads QGYRYPRPAS…PTSSLGEERN (107 aa). Phosphoserine; by DYRK2, GSK3-alpha, GSK3-beta and PASK is present on Ser-641. Ser-645, Ser-649, Ser-652, Ser-653, Ser-657, and Ser-672 each carry phosphoserine. Acidic residues predominate over residues 658–681; that stretch reads EDEEEPRDGPLGEDSERYDEEEEA. Positions 682–695 are enriched in basic and acidic residues; sequence AKDRRNIRAPEWPR. Phosphoserine is present on residues Ser-698, Ser-709, and Ser-711. Positions 698-738 are enriched in low complexity; it reads SCSSSTGGSKRSNSVDTGPSSSLSTPTEPLSPTSSLGEERN. Phosphothreonine occurs at positions 722 and 724. Phosphoserine is present on residues Ser-728 and Ser-732.

It belongs to the glycosyltransferase 3 family. As to quaternary structure, part of the GYS1-GYG1 complex, a heterooctamer composed of a tetramer of GYS1 and 2 dimers of GYG1, where each GYS1 protomer binds to one GYG1 subunit (via GYG1 C-terminus); the GYS1 tetramer may dissociate from GYG1 dimers to continue glycogen polymerization on its own. Primed phosphorylation at Ser-657 (site 5) by CSNK2A1 and CSNK2A2 is required for inhibitory phosphorylation at Ser-641 (site 3a), Ser-645 (site 3b), Ser-649 (site 3c) and Ser-653 (site 4) by GSK3A an GSK3B. Phosphorylated at Ser-641 by PASK, leading to inactivation; phosphorylation by PASK is inhibited by glycogen. Phosphorylated at Ser-641 by DYRK2, leading to inactivation. Dephosphorylation at Ser-641 and Ser-645 by PP1 activates the enzyme. Phosphorylation at Ser-8 by AMPK inactivates the enzyme activity.

It catalyses the reaction [(1-&gt;4)-alpha-D-glucosyl](n) + UDP-alpha-D-glucose = [(1-&gt;4)-alpha-D-glucosyl](n+1) + UDP + H(+). Its pathway is glycan biosynthesis; glycogen biosynthesis. With respect to regulation, allosteric activation by glucose-6-phosphate. Phosphorylation reduces the activity towards UDP-glucose. When in the non-phosphorylated state, glycogen synthase does not require glucose-6-phosphate as an allosteric activator; when phosphorylated it does. Its function is as follows. Glycogen synthase participates in the glycogen biosynthetic process along with glycogenin and glycogen branching enzyme. Extends the primer composed of a few glucose units formed by glycogenin by adding new glucose units to it. In this context, glycogen synthase transfers the glycosyl residue from UDP-Glc to the non-reducing end of alpha-1,4-glucan. This chain is Glycogen [starch] synthase, muscle (Gys1), found in Mus musculus (Mouse).